A 215-amino-acid polypeptide reads, in one-letter code: Large ribosomal subunit protein uL4 (215 aa).

The tract at residues 43-97 (RRQGTHSTKTRAEVSGGGKKPWRQKGTGRARAGSTRSPIWVGGGKTHTPKPRDYS) is disordered.

This sequence belongs to the universal ribosomal protein uL4 family. Part of the 50S ribosomal subunit.

One of the primary rRNA binding proteins, this protein initially binds near the 5'-end of the 23S rRNA. It is important during the early stages of 50S assembly. It makes multiple contacts with different domains of the 23S rRNA in the assembled 50S subunit and ribosome. In terms of biological role, forms part of the polypeptide exit tunnel. This is Large ribosomal subunit protein uL4 from Brachyspira pilosicoli (Serpulina pilosicoli).